The primary structure comprises 1415 residues: DNA-directed RNA polymerase subunit beta' (1415 aa).

The Zn(2+) site is built by cysteine 72, cysteine 74, cysteine 87, and cysteine 90. Mg(2+) is bound by residues aspartate 463, aspartate 465, and aspartate 467. Zn(2+)-binding residues include cysteine 811, cysteine 885, cysteine 892, and cysteine 895.

The protein belongs to the RNA polymerase beta' chain family. As to quaternary structure, the RNAP catalytic core consists of 2 alpha, 1 beta, 1 beta' and 1 omega subunit. When a sigma factor is associated with the core the holoenzyme is formed, which can initiate transcription. Requires Mg(2+) as cofactor. The cofactor is Zn(2+).

It catalyses the reaction RNA(n) + a ribonucleoside 5'-triphosphate = RNA(n+1) + diphosphate. In terms of biological role, DNA-dependent RNA polymerase catalyzes the transcription of DNA into RNA using the four ribonucleoside triphosphates as substrates. The protein is DNA-directed RNA polymerase subunit beta' of Cereibacter sphaeroides (strain ATCC 17023 / DSM 158 / JCM 6121 / CCUG 31486 / LMG 2827 / NBRC 12203 / NCIMB 8253 / ATH 2.4.1.) (Rhodobacter sphaeroides).